Reading from the N-terminus, the 411-residue chain is Serine--tRNA ligase (411 aa).

226–228 (TSE) is a binding site for L-serine. 257-259 (RQE) is a binding site for ATP. Glu280 provides a ligand contact to L-serine. 344–347 (EISS) is an ATP binding site. Ser379 lines the L-serine pocket.

This sequence belongs to the class-II aminoacyl-tRNA synthetase family. Type-1 seryl-tRNA synthetase subfamily. In terms of assembly, homodimer. The tRNA molecule binds across the dimer.

It is found in the cytoplasm. The enzyme catalyses tRNA(Ser) + L-serine + ATP = L-seryl-tRNA(Ser) + AMP + diphosphate + H(+). It catalyses the reaction tRNA(Sec) + L-serine + ATP = L-seryl-tRNA(Sec) + AMP + diphosphate + H(+). Its pathway is aminoacyl-tRNA biosynthesis; selenocysteinyl-tRNA(Sec) biosynthesis; L-seryl-tRNA(Sec) from L-serine and tRNA(Sec): step 1/1. In terms of biological role, catalyzes the attachment of serine to tRNA(Ser). Is also able to aminoacylate tRNA(Sec) with serine, to form the misacylated tRNA L-seryl-tRNA(Sec), which will be further converted into selenocysteinyl-tRNA(Sec). This Campylobacter lari (strain RM2100 / D67 / ATCC BAA-1060) protein is Serine--tRNA ligase.